We begin with the raw amino-acid sequence, 153 residues long: MGSFSTIMASFLLFLAFQLQGQTRANPVYGSVSNGDLMDFKNLLDRLEDKMPLEDEVMPPQVLSDQSEEERAALSPLPEVPPWTGEVNPAQRDGGALGRGSWDSSDRSALLKSKLRALLAAPRSLRRSSCFGGRMDRIGAQSGLGCNSFRYRR.

An N-terminal signal peptide occupies residues 1–25 (MGSFSTIMASFLLFLAFQLQGQTRA). Propeptides lie at residues 26 to 123 (NPVY…AAPR) and 93 to 103 (DGGALGRGSWD). Residues 54-105 (EDEVMPPQVLSDQSEEERAALSPLPEVPPWTGEVNPAQRDGGALGRGSWDSS) are disordered. Ser129 carries the post-translational modification Phosphoserine. Cys130 and Cys146 are oxidised to a cystine. Positions 147–151 (NSFRY) are important for degradation of atrial natriuretic peptide by IDE.

This sequence belongs to the natriuretic peptide family. As to quaternary structure, homodimer; disulfide-linked antiparallel dimer. The precursor molecule is proteolytically cleaved by CORIN at Arg-123 to produce the atrial natriuretic peptide. Undergoes further proteolytic cleavage by unknown proteases to give rise to long-acting natriuretic peptide, vessel dilator and kaliuretic peptide. Additional processing gives rise to the auriculin and atriopeptin peptides. In the kidneys, alternative processing by an unknown protease results in the peptide urodilatin. Post-translationally, cleavage by MME initiates degradation of the factor and thereby regulates its activity. Degradation by IDE results in reduced activation of NPR1 (in vitro). During IDE degradation, the resulting products can temporarily stimulate NPR2 to produce cGMP, before the fragments are completely degraded and inactivated by IDE (in vitro). In terms of processing, degraded by IDE. Phosphorylation on Ser-129 decreases vasorelaxant activity.

It is found in the secreted. The protein localises to the perikaryon. Its subcellular location is the cell projection. Functionally, hormone that plays a key role in mediating cardio-renal homeostasis, and is involved in vascular remodeling and regulating energy metabolism. Acts by specifically binding and stimulating NPR1 to produce cGMP, which in turn activates effector proteins, such as PRKG1, that drive various biological responses. Regulates vasodilation, natriuresis, diuresis and aldosterone synthesis and is therefore essential for regulating blood pressure, controlling the extracellular fluid volume and maintaining the fluid-electrolyte balance. Also involved in inhibiting cardiac remodeling and cardiac hypertrophy by inducing cardiomyocyte apoptosis and attenuating the growth of cardiomyocytes and fibroblasts. Plays a role in female pregnancy by promoting trophoblast invasion and spiral artery remodeling in uterus, and thus prevents pregnancy-induced hypertension. In adipose tissue, acts in various cGMP- and PKG-dependent pathways to regulate lipid metabolism and energy homeostasis. This includes up-regulating lipid metabolism and mitochondrial oxygen utilization by activating the AMP-activated protein kinase (AMPK), and increasing energy expenditure by acting via MAPK11 to promote the UCP1-dependent thermogenesis of brown adipose tissue. Binds the clearance receptor NPR3 which removes the hormone from circulation. Its function is as follows. May have a role in cardio-renal homeostasis through regulation of natriuresis, diuresis, vasodilation, and inhibiting aldosterone synthesis. In vitro, promotes the production of cGMP and induces vasodilation. May promote natriuresis, at least in part, by enhancing prostaglandin E2 synthesis resulting in the inhibition of renal Na+-K+-ATPase. However reports on the involvement of this peptide in mammal blood volume and blood pressure homeostasis are conflicting; according to a report, in vivo it is not sufficient to activate cGMP and does not inhibit collecting duct transport nor effect diuresis and natriuresis. Appears to bind to specific receptors that are distinct from the receptors bound by atrial natriuretic peptide and vessel dilator. Possibly enhances protein excretion in urine by decreasing proximal tubular protein reabsorption. May have a role in cardio-renal homeostasis through regulation of natriuresis, diuresis, and vasodilation. In vitro, promotes the production of cGMP and induces vasodilation. May promote natriuresis, at least in part, by enhancing prostaglandin E2 synthesis resulting in the inhibition of renal Na+-K+-ATPase. However reports on the involvement of this peptide in mammal blood volume and blood pressure homeostasis are conflicting; according to a report it is not sufficient to activate cGMP and does not inhibit collecting duct transport nor effect diuresis and natriuresis. Appears to bind to specific receptors that are distinct from the receptors bound by the atrial natriuretic and long-acting natriuretic peptides. Possibly functions in protein excretion in urine by maintaining the integrity of the proximal tubules and enhancing protein excretion by decreasing proximal tubular protein reabsorption. In terms of biological role, may have a role in cardio-renal homeostasis through regulation of diuresis and inhibiting aldosterone synthesis. In vitro, promotes the production of cGMP and induces vasodilation. May promote natriuresis, at least in part, by enhancing prostaglandin E2 synthesis resulting in the inhibition of renal Na+-K+-ATPase. May have a role in potassium excretion but not sodium excretion (natriuresis). Possibly enhances protein excretion in urine by decreasing proximal tubular protein reabsorption. Functionally, hormone produced in the kidneys that appears to be important for maintaining cardio-renal homeostasis. Mediates vasodilation, natriuresis and diuresis primarily in the renal system, in order to maintain the extracellular fluid volume and control the fluid-electrolyte balance. Specifically binds and stimulates cGMP production by renal transmembrane receptors, likely NPR1. Urodilatin not ANP, may be the natriuretic peptide responsible for the regulation of sodium and water homeostasis in the kidney. Its function is as follows. May have a role in cardio-renal homeostasis through regulation of natriuresis and vasodilation. In vivo promotes natriuresis and in vitro, vasodilates renal artery strips. May have a role in cardio-renal homeostasis through regulation of regulation of natriuresis and vasodilation. In vivo promotes natriuresis. In vitro, vasodilates intestinal smooth muscle but not smooth muscle strips. In terms of biological role, may have a role in cardio-renal homeostasis through regulation of natriuresis and vasodilation. In vivo promotes natriuresis. In vitro, selectively vasodilates intestinal and vascular smooth muscle strips. Functionally, may have a role in cardio-renal homeostasis through regulation of natriuresis and vasodilation. In vivo promotes natriuresis. In vitro, selectively vasodilates intestinal smooth muscle but not vascular smooth muscle strips. In Equus caballus (Horse), this protein is Natriuretic peptides A (NPPA).